Here is a 169-residue protein sequence, read N- to C-terminus: Protein-export protein SecB (169 aa).

It belongs to the SecB family. In terms of assembly, homotetramer, a dimer of dimers. One homotetramer interacts with 1 SecA dimer.

Its subcellular location is the cytoplasm. One of the proteins required for the normal export of preproteins out of the cell cytoplasm. It is a molecular chaperone that binds to a subset of precursor proteins, maintaining them in a translocation-competent state. It also specifically binds to its receptor SecA. This chain is Protein-export protein SecB, found in Pseudoalteromonas atlantica (strain T6c / ATCC BAA-1087).